A 506-amino-acid chain; its full sequence is Maturase K (506 aa).

It belongs to the intron maturase 2 family. MatK subfamily.

The protein resides in the plastid. It localises to the chloroplast. Functionally, usually encoded in the trnK tRNA gene intron. Probably assists in splicing its own and other chloroplast group II introns. This Wisteria frutescens (American wisteria) protein is Maturase K.